We begin with the raw amino-acid sequence, 270 residues long: Acyl-[acyl-carrier-protein]--UDP-N-acetylglucosamine O-acyltransferase (270 aa).

This sequence belongs to the transferase hexapeptide repeat family. LpxA subfamily. In terms of assembly, homotrimer.

The protein resides in the cytoplasm. It carries out the reaction a (3R)-hydroxyacyl-[ACP] + UDP-N-acetyl-alpha-D-glucosamine = a UDP-3-O-[(3R)-3-hydroxyacyl]-N-acetyl-alpha-D-glucosamine + holo-[ACP]. It participates in glycolipid biosynthesis; lipid IV(A) biosynthesis; lipid IV(A) from (3R)-3-hydroxytetradecanoyl-[acyl-carrier-protein] and UDP-N-acetyl-alpha-D-glucosamine: step 1/6. Involved in the biosynthesis of lipid A, a phosphorylated glycolipid that anchors the lipopolysaccharide to the outer membrane of the cell. In Helicobacter pylori (strain J99 / ATCC 700824) (Campylobacter pylori J99), this protein is Acyl-[acyl-carrier-protein]--UDP-N-acetylglucosamine O-acyltransferase.